The following is a 190-amino-acid chain: Protein soem-1 (190 aa).

One can recognise an SH2 domain in the interval 96–190 (YMEQNMNRVE…LVLKNQLKPV (95 aa)).

Interacts with abl-1. As to expression, expressed in PQR, but not AQR, Q neuroblast descendents.

Functionally, functions downstream of migratory protein mig-13 and may play a role in the control of Q neuroblast migration during larval development. This chain is Protein soem-1, found in Caenorhabditis elegans.